The sequence spans 51 residues: uncharacterized protein (51 aa).

A helical membrane pass occupies residues 10 to 29; it reads LFLYHPLFLLLLYIYLVLFI.

The protein resides in the plastid. The protein localises to the chloroplast membrane. This is an uncharacterized protein from Anthoceros angustus (Hornwort).